Here is an 87-residue protein sequence, read N- to C-terminus: MMKKLLIVSVKAYQKYISPLSPPSCRYKPTCSAYMLTAIEKHGTKGILMGIARILRCHPFVAGGVDPVPEDFSLMRNKNTSKNAEKA.

This sequence belongs to the UPF0161 family.

It localises to the cell membrane. Functionally, could be involved in insertion of integral membrane proteins into the membrane. The polypeptide is Putative membrane protein insertion efficiency factor (Streptococcus pyogenes serotype M12 (strain MGAS2096)).